The primary structure comprises 513 residues: Histidine ammonia-lyase (513 aa).

Residues alanine 145–glycine 147 constitute a cross-link (5-imidazolinone (Ala-Gly)). At serine 146 the chain carries 2,3-didehydroalanine (Ser).

Belongs to the PAL/histidase family. In terms of processing, contains an active site 4-methylidene-imidazol-5-one (MIO), which is formed autocatalytically by cyclization and dehydration of residues Ala-Ser-Gly.

The protein localises to the cytoplasm. The enzyme catalyses L-histidine = trans-urocanate + NH4(+). The protein operates within amino-acid degradation; L-histidine degradation into L-glutamate; N-formimidoyl-L-glutamate from L-histidine: step 1/3. In Vibrio vulnificus (strain YJ016), this protein is Histidine ammonia-lyase.